Here is a 306-residue protein sequence, read N- to C-terminus: Dioxygenase FrzG (306 aa).

Histidine 132, aspartate 134, and histidine 216 together coordinate Fe cation.

It belongs to the PhyH family. As to quaternary structure, homodimer. Requires Fe cation as cofactor.

The catalysed reaction is (1S,4S)-4-[(4-methoxyphenyl)methyl]-2-methyl-2,5-diazaspiro[bicyclo[3.2.1]octane-6,1'-cyclohexan]-4'-one + 2-oxoglutarate + O2 = (2S)-3-(4-methoxyphenyl)-2-[(3S)-3-(methylamino)-8-oxo-1-azaspiro[4.5]decan-1-yl]propanal + succinate + CO2. Its pathway is secondary metabolite biosynthesis. Functionally, dioxygenase; part of the gene cluster that mediates the biosynthesis of the alkaloid (-)-FR901483, a potent immunosuppressant that shows efficacy in animal models and a probable inhibitor of purine nucleotide biosynthesis by targeting phosphoribosylpyrophosphate amidotransferase (PPAT). Within the pathway, FrzG cleaves the C9-N10' bond to yield a conjugated iminium. FrzG is also able to catalyze the dehydrogenation between C7 and C8 which leads to a shunt product. The biosynthesis of (-)-FR901483 starts with the condensation of two L-tyrosines to yield (S,S)-dityrosyl-piperazine. This process occurs in 3 steps with the non-canonical nonribosomal peptide synthetase FrzA catalyzing the reduction of L-tyrosine into L-tyrosinal, the spontaneous condensation of 2 L-tyrosinal units, and the subsequent reduction by the NmrA-like family domain-containing oxidoreductase FrzB. The cytochrome P450 monooxygenase FrzC then performs coupling between N10 and C1' to morph the piperazine into a 1,4-diazabicyclo[3.2.1]octane spiro-fused to a 2,5-cyclohexadienone. The dienone portion is further reduced to cyclohexanone by the flavin-dependent reductase FrzD. The methyltranserases (MTs) FrzE and FrzF are then involved in the methylation at the C10' amine and the C4 phenolic oxygen, respectively. The order of the two MTs appear to be interchangeable. Cleavage of the C9-N10' bond by the dioxygenase FrzG then leads to formation of a conjugated iminium. In addition to the oxidation of C9, an additional dehydrogenation between C7 and C8 can occur to give a likely shunt product. The next biosynthetic step is the intramolecular aldol condensation catalyzed by the newly identified aldolase FrzH to yield an aza-tricyclic product with the formation of a C9-C3' bond. The short-chain dehydrogenase/reductase FrzI then produces dephospho-(-)-FR901483 that is phosphorylated at C4'-OH into (-)-FR901483 by the phosphotransferase FrzJ. This chain is Dioxygenase FrzG, found in Cladobotryum sp.